The following is a 132-amino-acid chain: Keratin, high-sulfur matrix protein, IIIA3 (132 aa).

Functionally, the keratin products of mammalian epidermal derivatives such as wool and hair consist of microfibrils embedded in a rigid matrix of other proteins. The matrix proteins include the high-sulfur and high-tyrosine keratins, having molecular weights of 6-20 kDa, whereas the microfibrils contain the larger, low-sulfur keratins (40-56 kDa). The polypeptide is Keratin, high-sulfur matrix protein, IIIA3 (Capra hircus (Goat)).